The chain runs to 137 residues: Protein MesC (137 aa).

The polypeptide is Protein MesC (mesC) (Leuconostoc mesenteroides).